The chain runs to 592 residues: Aspartate--tRNA(Asp/Asn) ligase (592 aa).

E172 is a binding site for L-aspartate. The segment at 196 to 199 is aspartate; that stretch reads QLFK. R218 provides a ligand contact to L-aspartate. ATP is bound by residues 218–220 and Q227; that span reads RDE. H450 is an L-aspartate binding site. E484 contacts ATP. Residue R491 participates in L-aspartate binding. 536 to 539 provides a ligand contact to ATP; it reads GLDR.

It belongs to the class-II aminoacyl-tRNA synthetase family. Type 1 subfamily. In terms of assembly, homodimer.

The protein resides in the cytoplasm. The enzyme catalyses tRNA(Asx) + L-aspartate + ATP = L-aspartyl-tRNA(Asx) + AMP + diphosphate. Aspartyl-tRNA synthetase with relaxed tRNA specificity since it is able to aspartylate not only its cognate tRNA(Asp) but also tRNA(Asn). Reaction proceeds in two steps: L-aspartate is first activated by ATP to form Asp-AMP and then transferred to the acceptor end of tRNA(Asp/Asn). This chain is Aspartate--tRNA(Asp/Asn) ligase, found in Thioalkalivibrio sulfidiphilus (strain HL-EbGR7).